The following is a 940-amino-acid chain: MEEEEGAAAREWGATPAGPVWTAVFDYEAVGDEELTLRRGDRVQVLSQDCAVSGDEGWWTGQLPSGRVGVFPSNYVAPAAPAAPSDLQLPQEIPFHELQLEEIIGVGGFGKVYRAVWRGEEVAVKAARLDPERDPAVTAEQVRQEARLFGALQHPNIIALRGACLSPPNLCLVMEYARGGALSRVLAGRRVPPHVLVNWAVQVARGMNYLHNDAPVPIIHRDLKSINILILEAIENHNLADTVLKITDFGLAREWHKTTKMSAAGTYAWMAPEVIRLSLFSKSSDVWSFGVLLWELLTGEVPYREIDALAVAYGVAMNKLTLPIPSTCPEPFARLLEECWDPDPHGRPDFGSILKQLEVIEQSALFQMPLESFHSLQEDWKLEIQHMFDDLRTKEKELRSREEELLRAAQEQRFQEEQLRRREQELAEREMDIVERELHLLMSQLSQEKPRVRKRKGNFKRSRLLKLREGSSHISLPSGFEHKITVQASPTLDKRKGSDGASPPASPSIIPRLRAIRLTPMDCGGSSGSGTWSRSGPPKKEELVGGKKKGRTWGPSSTLQKERAGGEERLKALGEGSKQWSSSAPNLGKSPKHTPMAPGFASLNEMEEFAEADEGNNVPPSPYSTPSYLKVPLPAEPSPCVQAPWEPPAVTPSRPGHGARRRCDLALLSCATLLSAVGLGADVAEARAGDGEEQRRWLDSLFFPRPGRFPRGLSPTGRPGGRREDTAPGLGLAPSATLVSLSSVSDCNSTRSLLRSDSDEAAPAAPSPPPSPLAPSPSTNPLVDVELESFKKDPRQSLTPTHVTAAHAVSRGHRRTPSDGALRQREPLELTNHGPRDPLDFPRLPDPQALFPTRRRPLEFPGRPTTLTFAPRPRPAASRPRLDPWKLVSFGRTLSISPPSRPDTPESPGPPSVQPTLLDMDMEGQSQDNTVPLCGVYGSH.

The 66-residue stretch at 16–81 (PAGPVWTAVF…PSNYVAPAAP (66 aa)) folds into the SH3 domain. Residues 98–360 (LQLEEIIGVG…GSILKQLEVI (263 aa)) enclose the Protein kinase domain. ATP is bound by residues 104–112 (IGVGGFGKV) and Lys-125. The active-site Proton acceptor is Asp-222. Position 258 is a phosphothreonine; by autocatalysis (Thr-258). Ser-262 is modified (phosphoserine; by autocatalysis and MAP4K1). 2 leucine-zipper regions span residues 384–405 (IQHM…EEEL) and 419–440 (LRRR…ELHL). 3 disordered regions span residues 490 to 599 (PTLD…MAPG), 687 to 734 (RAGD…GLAP), and 749 to 917 (STRS…QPTL). Residues Ser-498, Ser-502, and Ser-506 each carry the phosphoserine modification. Residues 501–511 (ASPPASPSIIP) are compositionally biased toward low complexity. At Thr-552 the chain carries Phosphothreonine. Basic and acidic residues-rich tracts occupy residues 560–572 (QKER…RLKA) and 687–698 (RAGDGEEQRRWL). A compositionally biased stretch (pro residues) spans 765–775 (APSPPPSPLAP). The segment covering 822-840 (LRQREPLELTNHGPRDPLD) has biased composition (basic and acidic residues). Arg-843 carries the post-translational modification Omega-N-methylarginine. A compositionally biased stretch (pro residues) spans 899–913 (PSRPDTPESPGPPSV).

The protein belongs to the protein kinase superfamily. STE Ser/Thr protein kinase family. MAP kinase kinase kinase subfamily. Homodimer. Interacts with SH3RF2. It depends on Mg(2+) as a cofactor. Post-translationally, autophosphorylation on serine and threonine residues within the activation loop plays a role in enzyme activation.

The catalysed reaction is L-seryl-[protein] + ATP = O-phospho-L-seryl-[protein] + ADP + H(+). It carries out the reaction L-threonyl-[protein] + ATP = O-phospho-L-threonyl-[protein] + ADP + H(+). With respect to regulation, homodimerization via the leucine zipper domains is required for autophosphorylation and subsequent activation. Functionally, activates the JUN N-terminal pathway. This is Mitogen-activated protein kinase kinase kinase 10 (Map3k10) from Mus musculus (Mouse).